Consider the following 459-residue polypeptide: Septin-4 (459 aa).

4 positions are modified to phosphoserine: S10, S49, S98, and S99. Disordered regions lie at residues F18–L52 and S70–S98. In terms of domain architecture, Septin-type G spans K122–S395. The interval G132 to S139 is G1 motif. GTP is bound by residues G132–S139 and T166. Residues D189–G192 are G3 motif. The G4 motif stretch occupies residues A270–D273. Residue K271 to E279 coordinates GTP. Phosphoserine is present on S306. GTP-binding residues include G329 and R344. A disordered region spans residues T410 to T430. S413 bears the Phosphoserine mark. T415 carries the post-translational modification Phosphothreonine. Positions I434–H459 form a coiled coil.

Belongs to the TRAFAC class TrmE-Era-EngA-EngB-Septin-like GTPase superfamily. Septin GTPase family. As to quaternary structure, septins polymerize into heterooligomeric protein complexes that form filaments, and can associate with cellular membranes, actin filaments and microtubules. GTPase activity is required for filament formation. Interacts with SEPTIN8. Component of a septin core octameric complex consisting of SEPTIN12, SEPTIN7, SEPTIN6 and SEPTIN2 or SEPTIN4 in the order 12-7-6-2-2-6-7-12 or 12-7-6-4-4-6-7-12. Interacts with SEPTIN14 (via C-terminus). Interacts with DYRK1A. Interacts with SLC6A3/DAT and SNCA/alpha-synuclein. Interacts with STX1A; in the striatum. Interacts with XIAP (via BIR3 domain) following the induction of apoptosis. Interacts with AREL1 (via HECT domain); in the cytoplasm following induction of apoptosis. Post-translationally, phosphorylated by DYRK1A.

It is found in the cytoplasm. The protein localises to the cell projection. Its subcellular location is the cilium. The protein resides in the flagellum. It localises to the cytoplasmic vesicle. It is found in the secretory vesicle. The protein localises to the axon. Its subcellular location is the dendrite. The protein resides in the perikaryon. Filament-forming cytoskeletal GTPase. Pro-apoptotic protein involved in LGR5-positive intestinal stem cell and Paneth cell expansion in the intestines, via its interaction with XIAP. May also play a role in the regulation of cell fate in the intestine. Positive regulator of apoptosis involved in hematopoietic stem cell homeostasis; via its interaction with XIAP. Negative regulator of repair and hair follicle regeneration in response to injury, due to inhibition of hair follicle stem cell proliferation, potentially via its interaction with XIAP. Plays an important role in male fertility and sperm motility. During spermiogenesis, essential for the establishment of the annulus (a fibrous ring structure connecting the midpiece and the principal piece of the sperm flagellum) which is a requisite for the structural and mechanical integrity of the sperm. Involved in the migration of cortical neurons and the formation of neuron leading processes during embryonic development. Required for dopaminergic metabolism in presynaptic autoreceptors; potentially via activity as a presynaptic scaffold protein. The protein is Septin-4 of Rattus norvegicus (Rat).